We begin with the raw amino-acid sequence, 298 residues long: NAD kinase (298 aa).

Aspartate 80 acts as the Proton acceptor in catalysis. Residues 80 to 81 (DG), 154 to 155 (ND), arginine 182, aspartate 184, 195 to 200 (TAYALS), alanine 219, and glutamine 253 each bind NAD(+).

Belongs to the NAD kinase family. Requires a divalent metal cation as cofactor.

The protein localises to the cytoplasm. The catalysed reaction is NAD(+) + ATP = ADP + NADP(+) + H(+). Functionally, involved in the regulation of the intracellular balance of NAD and NADP, and is a key enzyme in the biosynthesis of NADP. Catalyzes specifically the phosphorylation on 2'-hydroxyl of the adenosine moiety of NAD to yield NADP. This is NAD kinase from Paracidovorax citrulli (strain AAC00-1) (Acidovorax citrulli).